Here is a 271-residue protein sequence, read N- to C-terminus: Bifunctional protein FolD (271 aa).

NADP(+) is bound by residues 154 to 156 (GRS), Ser181, and Ile222.

It belongs to the tetrahydrofolate dehydrogenase/cyclohydrolase family. In terms of assembly, homodimer.

It catalyses the reaction (6R)-5,10-methylene-5,6,7,8-tetrahydrofolate + NADP(+) = (6R)-5,10-methenyltetrahydrofolate + NADPH. The enzyme catalyses (6R)-5,10-methenyltetrahydrofolate + H2O = (6R)-10-formyltetrahydrofolate + H(+). It participates in one-carbon metabolism; tetrahydrofolate interconversion. Its function is as follows. Catalyzes the oxidation of 5,10-methylenetetrahydrofolate to 5,10-methenyltetrahydrofolate and then the hydrolysis of 5,10-methenyltetrahydrofolate to 10-formyltetrahydrofolate. The polypeptide is Bifunctional protein FolD (Thermotoga petrophila (strain ATCC BAA-488 / DSM 13995 / JCM 10881 / RKU-1)).